The sequence spans 747 residues: NAD(P)H-quinone oxidoreductase subunit 5, chloroplastic (747 aa).

16 consecutive transmembrane segments (helical) span residues 8–28 (AWIIPFVPLLVTMLIGLELLL), 39–59 (IWAFPAVLLLSIVMVFSTKLA), 89–109 (IDPLTSIMSILITTVGIMVLI), 125–145 (FAYMSFFNTAMLGLVTSPNLI), 147–167 (IHIFWELVGMCSYLLIGFWFT), 185–205 (GDFGLLLGILGFYLITGSFEF), 231–251 (AFLLFLGAVAKSAQFPLHVWL), 259–279 (TPISALIHAATMVAAGIFLVA), 281–301 (LLPLFIAIPYIMNIISLIGVI), 328–348 (LGYMMLALGIGSYRAALFHLI), 355–375 (ALLFLGSGSIIHSMEPIVGYS), 397–417 (TTFFLGTLSLCGIPPLACFWS), 426–446 (WLYSPIFAIIAFYTAGLTAFY), 550–570 (LFPLLILAIFTLFVGCIGIHF), 608–628 (FYSVSIAYFGIFLASVLYGSV), and 726–746 (LFLYLACVSIVLLIYYYYNFL).

Belongs to the complex I subunit 5 family. NDH is composed of at least 16 different subunits, 5 of which are encoded in the nucleus.

The protein localises to the plastid. It localises to the chloroplast thylakoid membrane. It carries out the reaction a plastoquinone + NADH + (n+1) H(+)(in) = a plastoquinol + NAD(+) + n H(+)(out). The enzyme catalyses a plastoquinone + NADPH + (n+1) H(+)(in) = a plastoquinol + NADP(+) + n H(+)(out). In terms of biological role, NDH shuttles electrons from NAD(P)H:plastoquinone, via FMN and iron-sulfur (Fe-S) centers, to quinones in the photosynthetic chain and possibly in a chloroplast respiratory chain. The immediate electron acceptor for the enzyme in this species is believed to be plastoquinone. Couples the redox reaction to proton translocation, and thus conserves the redox energy in a proton gradient. The chain is NAD(P)H-quinone oxidoreductase subunit 5, chloroplastic (ndhF) from Nymphaea alba (White water-lily).